A 199-amino-acid chain; its full sequence is Holliday junction branch migration complex subunit RuvA (199 aa).

Positions 1–63 (MYEYLTGLVT…EDNISLFGFT (63 aa)) are domain I. A domain II region spans residues 64 to 142 (DQNEKNLFMQ…NESSSSLFAT (79 aa)). The segment at 143-149 (TQLTVDA) is flexible linker. The domain III stretch occupies residues 150 to 199 (TVNRELKDALEALAALGYKERDIKKVQKALMKEEQMATDEYLRQALRLLN).

Belongs to the RuvA family. Homotetramer. Forms an RuvA(8)-RuvB(12)-Holliday junction (HJ) complex. HJ DNA is sandwiched between 2 RuvA tetramers; dsDNA enters through RuvA and exits via RuvB. An RuvB hexamer assembles on each DNA strand where it exits the tetramer. Each RuvB hexamer is contacted by two RuvA subunits (via domain III) on 2 adjacent RuvB subunits; this complex drives branch migration. In the full resolvosome a probable DNA-RuvA(4)-RuvB(12)-RuvC(2) complex forms which resolves the HJ.

The protein localises to the cytoplasm. Its function is as follows. The RuvA-RuvB-RuvC complex processes Holliday junction (HJ) DNA during genetic recombination and DNA repair, while the RuvA-RuvB complex plays an important role in the rescue of blocked DNA replication forks via replication fork reversal (RFR). RuvA specifically binds to HJ cruciform DNA, conferring on it an open structure. The RuvB hexamer acts as an ATP-dependent pump, pulling dsDNA into and through the RuvAB complex. HJ branch migration allows RuvC to scan DNA until it finds its consensus sequence, where it cleaves and resolves the cruciform DNA. In Limosilactobacillus reuteri subsp. reuteri (strain JCM 1112) (Lactobacillus reuteri), this protein is Holliday junction branch migration complex subunit RuvA.